A 247-amino-acid polypeptide reads, in one-letter code: Carboxy-S-adenosyl-L-methionine synthase (247 aa).

Residues Tyr39, 64–66 (GCS), 89–90 (DN), 117–118 (DI), Asn132, and Arg199 each bind S-adenosyl-L-methionine.

Belongs to the class I-like SAM-binding methyltransferase superfamily. Cx-SAM synthase family. Homodimer.

The catalysed reaction is prephenate + S-adenosyl-L-methionine = carboxy-S-adenosyl-L-methionine + 3-phenylpyruvate + H2O. Functionally, catalyzes the conversion of S-adenosyl-L-methionine (SAM) to carboxy-S-adenosyl-L-methionine (Cx-SAM). This Citrobacter koseri (strain ATCC BAA-895 / CDC 4225-83 / SGSC4696) protein is Carboxy-S-adenosyl-L-methionine synthase.